The sequence spans 579 residues: DBIRD complex subunit ZNF326 (579 aa).

The tract at residues Met-1–Gly-124 is mediates transcriptional activation. Ser-48, Ser-56, Ser-63, Ser-69, Ser-81, Ser-82, Ser-91, Ser-106, Ser-114, Ser-118, Ser-121, and Ser-137 each carry phosphoserine. A Glycyl lysine isopeptide (Lys-Gly) (interchain with G-Cter in SUMO2) cross-link involves residue Lys-140. Positions Tyr-154–Gly-194 are disordered. Arg-173 bears the Omega-N-methylarginine mark. At Ser-212 the chain carries Phosphoserine. Arg-235 is modified (omega-N-methylarginine). The short motif at Lys-238–Lys-260 is the Bipartite nuclear localization signal element. Lys-240 is covalently cross-linked (Glycyl lysine isopeptide (Lys-Gly) (interchain with G-Cter in SUMO2)). Residue Lys-247 is modified to N6-acetyllysine; alternate. Lys-247 is covalently cross-linked (Glycyl lysine isopeptide (Lys-Gly) (interchain with G-Cter in SUMO2); alternate). The disordered stretch occupies residues Pro-248–Glu-302. Phosphothreonine is present on Thr-251. Glycyl lysine isopeptide (Lys-Gly) (interchain with G-Cter in SUMO2) cross-links involve residues Lys-254 and Lys-264. The residue at position 270 (Ser-270) is a Phosphoserine. Basic and acidic residues predominate over residues Thr-272 to Arg-290. The C2H2 AKAP95-type 1 zinc finger occupies Cys-314–His-336. Lys-401 is covalently cross-linked (Glycyl lysine isopeptide (Lys-Gly) (interchain with G-Cter in SUMO2)). Residues Cys-407 to His-430 form a C2H2 AKAP95-type 2 zinc finger. Glycyl lysine isopeptide (Lys-Gly) (interchain with G-Cter in SUMO2) cross-links involve residues Lys-459 and Lys-467. A disordered region spans residues Asn-470 to Asn-579. Acidic residues-rich tracts occupy residues Ile-483–Gly-520, Gly-529–Gly-541, and Gly-549–Lys-565.

This sequence belongs to the AKAP95 family. In terms of assembly, component of the DBIRD complex. Interacts with CCAR2; the interaction is direct.

It is found in the nucleus matrix. Functionally, core component of the DBIRD complex, a multiprotein complex that acts at the interface between core mRNP particles and RNA polymerase II (RNAPII) and integrates transcript elongation with the regulation of alternative splicing: the DBIRD complex affects local transcript elongation rates and alternative splicing of a large set of exons embedded in (A + T)-rich DNA regions. May play a role in neuronal differentiation and is able to bind DNA and activate expression in vitro. The protein is DBIRD complex subunit ZNF326 (ZNF326) of Bos taurus (Bovine).